Reading from the N-terminus, the 343-residue chain is tRNA-specific 2-thiouridylase MnmA (343 aa).

Residues 7–14 (ALSGGVDS) and M33 contribute to the ATP site. The Nucleophile role is filled by C87. C87 and C184 form a disulfide bridge. G111 serves as a coordination point for ATP. The interaction with tRNA stretch occupies residues 135–137 (KDQ). C184 functions as the Cysteine persulfide intermediate in the catalytic mechanism. An interaction with tRNA region spans residues 289-290 (RY).

This sequence belongs to the MnmA/TRMU family.

It is found in the cytoplasm. It catalyses the reaction S-sulfanyl-L-cysteinyl-[protein] + uridine(34) in tRNA + AH2 + ATP = 2-thiouridine(34) in tRNA + L-cysteinyl-[protein] + A + AMP + diphosphate + H(+). In terms of biological role, catalyzes the 2-thiolation of uridine at the wobble position (U34) of tRNA, leading to the formation of s(2)U34. The polypeptide is tRNA-specific 2-thiouridylase MnmA (Desulforudis audaxviator (strain MP104C)).